The sequence spans 335 residues: Large ribosomal subunit protein uL10 (335 aa).

The disordered stretch occupies residues 300 to 335 (QVSEQAAEKKEEKKEEEKKGPSEEEIGGGLSSLFGG). Over residues 305-321 (AAEKKEEKKEEEKKGPS) the composition is skewed to basic and acidic residues. Residues 326–335 (GGGLSSLFGG) show a composition bias toward gly residues.

Belongs to the universal ribosomal protein uL10 family. In terms of assembly, part of the 50S ribosomal subunit. Forms part of the ribosomal stalk which helps the ribosome interact with GTP-bound translation factors. Forms a heptameric L10(L12)2(L12)2(L12)2 complex, where L10 forms an elongated spine to which the L12 dimers bind in a sequential fashion.

Forms part of the ribosomal stalk, playing a central role in the interaction of the ribosome with GTP-bound translation factors. This is Large ribosomal subunit protein uL10 from Sulfolobus acidocaldarius (strain ATCC 33909 / DSM 639 / JCM 8929 / NBRC 15157 / NCIMB 11770).